A 98-amino-acid chain; its full sequence is Small ribosomal subunit protein bS20 (98 aa).

This sequence belongs to the bacterial ribosomal protein bS20 family.

Functionally, binds directly to 16S ribosomal RNA. This is Small ribosomal subunit protein bS20 from Prochlorococcus marinus (strain NATL1A).